A 246-amino-acid chain; its full sequence is E3 ubiquitin-protein ligase MARCHF2 (246 aa).

The RING-CH-type zinc-finger motif lies at 56–116; that stretch reads DTPSDCPFCR…ELCHTEFAVE (61 aa). Zn(2+) contacts are provided by cysteine 64, cysteine 67, cysteine 80, cysteine 82, histidine 90, cysteine 93, cysteine 106, and cysteine 109. Residues 121–246 are required for interaction with IKBKG; that stretch reads PLTEWLKDPG…LKKVAEETPV (126 aa). Helical transmembrane passes span 138-158 and 175-195; these read LCCDMVCFVFITPLAAISGWL and AVGLIALTIALFTIYVLWTLV.

Interacts with STX6; the interaction promotes MARCHF2-mediated ubiquitination and degradation of CFTR. Interacts with MARCHF3. Interacts with GOPC/CAL; the interaction leads to CFTR ubiquitination and degradation. Interacts with CFTR; the interaction leads to CFTR ubiqtuitination and degradation. Interacts (via PDZ domain) with DLG1 (via PDZ domains); the interaction leads to DLG1 ubiqtuitination and degradation. Interacts with ERGIC3. Interacts with ADRB2. Interacts with IKBKG/NEMO; during the late stages of macrophage viral and bacterial infection; the interaction leads to ubiquitination and degradation of IKBKG/NEMO. Ubiquitously expressed. Present in liver (at protein level).

The protein localises to the endoplasmic reticulum membrane. Its subcellular location is the lysosome membrane. It is found in the endosome membrane. It localises to the golgi apparatus membrane. The protein resides in the cytoplasm. The protein localises to the cell membrane. The catalysed reaction is S-ubiquitinyl-[E2 ubiquitin-conjugating enzyme]-L-cysteine + [acceptor protein]-L-lysine = [E2 ubiquitin-conjugating enzyme]-L-cysteine + N(6)-ubiquitinyl-[acceptor protein]-L-lysine.. Its pathway is protein modification; protein ubiquitination. E3 ubiquitin-protein ligase that may mediate ubiquitination of TFRC and CD86, and promote their subsequent endocytosis and sorting to lysosomes via multivesicular bodies. E3 ubiquitin ligases accept ubiquitin from an E2 ubiquitin-conjugating enzyme in the form of a thioester and then directly transfer the ubiquitin to targeted substrates. Together with GOPC/CAL mediates the ubiquitination and lysosomal degradation of CFTR. Ubiquitinates and therefore mediates the degradation of DLG1. Regulates the intracellular trafficking and secretion of alpha1-antitrypsin/SERPINA1 and HP/haptoglobin via ubiquitination and degradation of the cargo receptor ERGIC3. Negatively regulates the antiviral and antibacterial immune response by repression of the NF-kB and type 1 IFN signaling pathways, via MARCHF2-mediated K48-linked polyubiquitination of IKBKG/NEMO, resulting in its proteasomal degradation. May be involved in endosomal trafficking through interaction with STX6. This Rattus norvegicus (Rat) protein is E3 ubiquitin-protein ligase MARCHF2 (Marchf2).